Here is a 205-residue protein sequence, read N- to C-terminus: Small ribosomal subunit protein uS4 (205 aa).

The disordered stretch occupies residues 27–46; sequence LNKRDYAPGQHGQRRKGKPS. The region spanning 118-178 is the S4 RNA-binding domain; sequence HGHVLVNGKR…HVDHRLMKGT (61 aa).

This sequence belongs to the universal ribosomal protein uS4 family. In terms of assembly, part of the 30S ribosomal subunit. Contacts protein S5. The interaction surface between S4 and S5 is involved in control of translational fidelity.

One of the primary rRNA binding proteins, it binds directly to 16S rRNA where it nucleates assembly of the body of the 30S subunit. In terms of biological role, with S5 and S12 plays an important role in translational accuracy. The chain is Small ribosomal subunit protein uS4 from Granulibacter bethesdensis (strain ATCC BAA-1260 / CGDNIH1).